The primary structure comprises 190 residues: Imidazoleglycerol-phosphate dehydratase (190 aa).

The protein belongs to the imidazoleglycerol-phosphate dehydratase family.

Its subcellular location is the cytoplasm. The enzyme catalyses D-erythro-1-(imidazol-4-yl)glycerol 3-phosphate = 3-(imidazol-4-yl)-2-oxopropyl phosphate + H2O. Its pathway is amino-acid biosynthesis; L-histidine biosynthesis; L-histidine from 5-phospho-alpha-D-ribose 1-diphosphate: step 6/9. This is Imidazoleglycerol-phosphate dehydratase from Methanococcus vannielii (strain ATCC 35089 / DSM 1224 / JCM 13029 / OCM 148 / SB).